Reading from the N-terminus, the 310-residue chain is Protoheme IX farnesyltransferase 2 (310 aa).

The next 9 membrane-spanning stretches (helical) occupy residues 25 to 45 (PGIIFGNLISVAGGFLLAAKG), 49 to 69 (LVLMLASLVGLSLVVASGCAI), 98 to 118 (HVLLFGIALGVLGFGILALFT), 121 to 141 (LALLFAAIGYVVYVGIYSLYM), 145 to 165 (SVYGTLVGSFSGAVPPVVGYC), 176 to 196 (VILLLMFSLWQMPHSYAIAIF), 222 to 242 (IVLYIAVFALVSTMLPLAGYT), 245 to 265 (AFMAVTCATSLWWLTMALKGY), and 277 to 297 (QVFGFSIITITALSVTMALDF).

Belongs to the UbiA prenyltransferase family. Protoheme IX farnesyltransferase subfamily.

It is found in the cell inner membrane. The catalysed reaction is heme b + (2E,6E)-farnesyl diphosphate + H2O = Fe(II)-heme o + diphosphate. It participates in porphyrin-containing compound metabolism; heme O biosynthesis; heme O from protoheme: step 1/1. In terms of biological role, converts heme B (protoheme IX) to heme O by substitution of the vinyl group on carbon 2 of heme B porphyrin ring with a hydroxyethyl farnesyl side group. The polypeptide is Protoheme IX farnesyltransferase 2 (Shewanella sp. (strain MR-4)).